We begin with the raw amino-acid sequence, 742 residues long: Phosphoribosylformylglycinamidine synthase subunit PurL (742 aa).

His-54 is an active-site residue. ATP contacts are provided by Tyr-57 and Lys-96. Glu-98 contributes to the Mg(2+) binding site. Residues 99 to 102 (SHNH) and Arg-121 contribute to the substrate site. The active-site Proton acceptor is the His-100. Asp-122 is a Mg(2+) binding site. Gln-245 contributes to the substrate binding site. Asp-273 is a binding site for Mg(2+). 317-319 (ESQ) is a substrate binding site. Positions 500 and 537 each coordinate ATP. Asn-538 is a Mg(2+) binding site. Ser-540 contributes to the substrate binding site.

The protein belongs to the FGAMS family. Monomer. Part of the FGAM synthase complex composed of 1 PurL, 1 PurQ and 2 PurS subunits.

The protein localises to the cytoplasm. It carries out the reaction N(2)-formyl-N(1)-(5-phospho-beta-D-ribosyl)glycinamide + L-glutamine + ATP + H2O = 2-formamido-N(1)-(5-O-phospho-beta-D-ribosyl)acetamidine + L-glutamate + ADP + phosphate + H(+). It participates in purine metabolism; IMP biosynthesis via de novo pathway; 5-amino-1-(5-phospho-D-ribosyl)imidazole from N(2)-formyl-N(1)-(5-phospho-D-ribosyl)glycinamide: step 1/2. In terms of biological role, part of the phosphoribosylformylglycinamidine synthase complex involved in the purines biosynthetic pathway. Catalyzes the ATP-dependent conversion of formylglycinamide ribonucleotide (FGAR) and glutamine to yield formylglycinamidine ribonucleotide (FGAM) and glutamate. The FGAM synthase complex is composed of three subunits. PurQ produces an ammonia molecule by converting glutamine to glutamate. PurL transfers the ammonia molecule to FGAR to form FGAM in an ATP-dependent manner. PurS interacts with PurQ and PurL and is thought to assist in the transfer of the ammonia molecule from PurQ to PurL. The protein is Phosphoribosylformylglycinamidine synthase subunit PurL of Geobacillus sp. (strain WCH70).